A 511-amino-acid polypeptide reads, in one-letter code: 2-isopropylmalate synthase (511 aa).

Residues Leu-5–Val-267 form the Pyruvate carboxyltransferase domain. Residues Asp-14, His-202, His-204, and Asn-238 each contribute to the Mn(2+) site. The regulatory domain stretch occupies residues Lys-393–Val-511.

The protein belongs to the alpha-IPM synthase/homocitrate synthase family. LeuA type 1 subfamily. In terms of assembly, homodimer. It depends on Mn(2+) as a cofactor.

The protein localises to the cytoplasm. The enzyme catalyses 3-methyl-2-oxobutanoate + acetyl-CoA + H2O = (2S)-2-isopropylmalate + CoA + H(+). Its pathway is amino-acid biosynthesis; L-leucine biosynthesis; L-leucine from 3-methyl-2-oxobutanoate: step 1/4. Catalyzes the condensation of the acetyl group of acetyl-CoA with 3-methyl-2-oxobutanoate (2-ketoisovalerate) to form 3-carboxy-3-hydroxy-4-methylpentanoate (2-isopropylmalate). In Nitrosococcus oceani (strain ATCC 19707 / BCRC 17464 / JCM 30415 / NCIMB 11848 / C-107), this protein is 2-isopropylmalate synthase.